The following is a 368-amino-acid chain: Tetraacyldisaccharide 4'-kinase (368 aa).

Position 66 to 73 (Thr66 to Thr73) interacts with ATP.

It belongs to the LpxK family.

The enzyme catalyses a lipid A disaccharide + ATP = a lipid IVA + ADP + H(+). The protein operates within glycolipid biosynthesis; lipid IV(A) biosynthesis; lipid IV(A) from (3R)-3-hydroxytetradecanoyl-[acyl-carrier-protein] and UDP-N-acetyl-alpha-D-glucosamine: step 6/6. Functionally, transfers the gamma-phosphate of ATP to the 4'-position of a tetraacyldisaccharide 1-phosphate intermediate (termed DS-1-P) to form tetraacyldisaccharide 1,4'-bis-phosphate (lipid IVA). The protein is Tetraacyldisaccharide 4'-kinase of Desulfatibacillum aliphaticivorans.